Here is a 281-residue protein sequence, read N- to C-terminus: 18S rRNA (guanine-N(7))-methyltransferase (281 aa).

Polar residues predominate over residues 212–231 (LPKGLTESQDADQASESMFT). The disordered stretch occupies residues 212–281 (LPKGLTESQD…YTGRKRKPRF (70 aa)). Over residues 242–256 (RDLVKKSREWVLEKK) the composition is skewed to basic and acidic residues.

It belongs to the class I-like SAM-binding methyltransferase superfamily. BUD23/WBSCR22 family. As to quaternary structure, heterodimer with TRMT112; this heterodimerization is necessary for the metabolic stability and activity of the catalytic subunit BUD23. Interacts with GRIP1. May be ubiquitinated and targeted to degradation in response to pro-inflammatory cytokine signaling.

It is found in the nucleus. The protein localises to the nucleoplasm. It localises to the cytoplasm. The protein resides in the perinuclear region. The enzyme catalyses a guanosine in 18S rRNA + S-adenosyl-L-methionine = an N(7)-methylguanosine in 18S rRNA + S-adenosyl-L-homocysteine. S-adenosyl-L-methionine-dependent methyltransferase that specifically methylates the N(7) position of a guanine in 18S rRNA. Requires the methyltransferase adapter protein TRM112 for full rRNA methyltransferase activity. Involved in the pre-rRNA processing steps leading to small-subunit rRNA production independently of its RNA-modifying catalytic activity. Important for biogenesis end export of the 40S ribosomal subunit independent on its methyltransferase activity. Locus-specific steroid receptor coactivator. Potentiates transactivation by glucocorticoid (NR3C1), mineralocorticoid (NR3C2), androgen (AR) and progesterone (PGR) receptors. Required for the maintenance of open chromatin at the TSC22D3/GILZ locus to facilitate NR3C1 loading on the response elements. Required for maintenance of dimethylation on histone H3 'Lys-79' (H3K79me2), although direct histone methyltransferase activity is not observed in vitro. This chain is 18S rRNA (guanine-N(7))-methyltransferase, found in Mus musculus (Mouse).